A 563-amino-acid polypeptide reads, in one-letter code: MTAQNRFRDTEIRASRGTKLTAKSWMTEAPLRMLMNNLDPEVAENPKELVVYGGIGRAARNWECYDKIVESLTHLNDDETLLIQSGKPVGVFKTHSNAPRVLIANSNLVPHWANWEHFNELDVKGLAMYGQMTAGSWIYIGSQGIVQGTYETFVEAGRQHFGGSLKGRWVLTAGLGGMGGAQPLAATLAGACSLNIECQQSRIDFRLKTRYVDEQATDFDDALARIKKYTSAGKAVSIALCGNAAEILPELVRRGVRPDMVTDQTSAHDPLNGYLPKGWSWEEYRRRAQSEPVLVVNAAKTSMAEHVEAMLAFHHMGIPTFDYGNNIRQMAQDMGVTHAFDFPGFVPAYIRPLFCRGVGPFRWAALSGDAEDIYKTDAKVKELIPDDEHLHHWLDMARERISFQGLPARICWVGLGQRAKLGLAFNEMVRTGELSAPIVIGRDHLDSGSVASPNRETEAMQDGSDAVSDWPLLNALLNTASGATWVSLHHGGGVGMGFSQHSGMVVVCDGSDDAAERIARVLHNDPATGVMRHADAGYDIAINCAQEQGLNLPMIAATQGRKA.

Residues 53–54 (GG), Gln-131, 177–179 (GMG), Glu-197, Arg-202, 243–244 (NA), 264–268 (QTSAH), 274–275 (YL), and Tyr-323 each bind NAD(+). The active site involves Cys-411. Residue Gly-493 participates in NAD(+) binding.

This sequence belongs to the urocanase family. The cofactor is NAD(+).

The protein localises to the cytoplasm. The catalysed reaction is 4-imidazolone-5-propanoate = trans-urocanate + H2O. It participates in amino-acid degradation; L-histidine degradation into L-glutamate; N-formimidoyl-L-glutamate from L-histidine: step 2/3. Its function is as follows. Catalyzes the conversion of urocanate to 4-imidazolone-5-propionate. The sequence is that of Urocanate hydratase from Yersinia enterocolitica serotype O:8 / biotype 1B (strain NCTC 13174 / 8081).